Reading from the N-terminus, the 332-residue chain is Chorismate synthase (332 aa).

Arg46 is a binding site for NADP(+). FMN-binding positions include His123–Ser125, Gly253, Lys268–Ser272, and Arg295.

Belongs to the chorismate synthase family. As to quaternary structure, homotetramer. FMNH2 is required as a cofactor.

It catalyses the reaction 5-O-(1-carboxyvinyl)-3-phosphoshikimate = chorismate + phosphate. Its pathway is metabolic intermediate biosynthesis; chorismate biosynthesis; chorismate from D-erythrose 4-phosphate and phosphoenolpyruvate: step 7/7. Functionally, catalyzes the anti-1,4-elimination of the C-3 phosphate and the C-6 proR hydrogen from 5-enolpyruvylshikimate-3-phosphate (EPSP) to yield chorismate, which is the branch point compound that serves as the starting substrate for the three terminal pathways of aromatic amino acid biosynthesis. This reaction introduces a second double bond into the aromatic ring system. The chain is Chorismate synthase from Chitinophaga pinensis (strain ATCC 43595 / DSM 2588 / LMG 13176 / NBRC 15968 / NCIMB 11800 / UQM 2034).